Reading from the N-terminus, the 448-residue chain is N-succinylarginine dihydrolase (448 aa).

Substrate is bound by residues 19-28 (GGLSYGNVAS), Asn-110, and 137-138 (HR). Residue Glu-174 is part of the active site. Arg-214 is a substrate binding site. Residue His-250 is part of the active site. Positions 252 and 365 each coordinate substrate. The active-site Nucleophile is Cys-371.

The protein belongs to the succinylarginine dihydrolase family. As to quaternary structure, homodimer.

The enzyme catalyses N(2)-succinyl-L-arginine + 2 H2O + 2 H(+) = N(2)-succinyl-L-ornithine + 2 NH4(+) + CO2. It participates in amino-acid degradation; L-arginine degradation via AST pathway; L-glutamate and succinate from L-arginine: step 2/5. In terms of biological role, catalyzes the hydrolysis of N(2)-succinylarginine into N(2)-succinylornithine, ammonia and CO(2). The protein is N-succinylarginine dihydrolase of Pseudomonas fluorescens (strain Pf0-1).